A 272-amino-acid chain; its full sequence is Nitrogenase iron protein (272 aa).

8-15 (GKGGIGKS) is an ATP binding site. Cys-94 serves as a coordination point for [4Fe-4S] cluster. Arg-97 is subject to ADP-ribosylarginine; by dinitrogenase reductase ADP-ribosyltransferase. Cys-129 is a binding site for [4Fe-4S] cluster.

Belongs to the NifH/BchL/ChlL family. In terms of assembly, homodimer. Requires [4Fe-4S] cluster as cofactor. Post-translationally, the reversible ADP-ribosylation of Arg-97 inactivates the nitrogenase reductase and regulates nitrogenase activity.

It catalyses the reaction N2 + 8 reduced [2Fe-2S]-[ferredoxin] + 16 ATP + 16 H2O = H2 + 8 oxidized [2Fe-2S]-[ferredoxin] + 2 NH4(+) + 16 ADP + 16 phosphate + 6 H(+). Its function is as follows. The key enzymatic reactions in nitrogen fixation are catalyzed by the nitrogenase complex, which has 2 components: the iron protein and the molybdenum-iron protein. In Clostridium acetobutylicum (strain ATCC 824 / DSM 792 / JCM 1419 / IAM 19013 / LMG 5710 / NBRC 13948 / NRRL B-527 / VKM B-1787 / 2291 / W), this protein is Nitrogenase iron protein.